We begin with the raw amino-acid sequence, 415 residues long: Dynein assembly factor with WD repeat domains 1 (415 aa).

WD repeat units follow at residues 90 to 129, 132 to 174, 175 to 214, 217 to 256, 259 to 298, 301 to 340, 343 to 384, and 386 to 415; these read AHILPLTNVALNKAGSCFITGSYDRTCKVWDTASGEELHT, GHKN…HTFR, GHTAEIVCLSFNPQSTVVATGSMDTTAKLWDIQNGEEVVT, GHLAEIISLSFDTSGDRIITGSFDHTVVVWDASTGRKVHT, GHCAEISSALFNWDCSLILTGSMDKTCMLWDATSGKYVAT, GHDDEILDSCFDYTGKLIATASADGTARVYNATTRKCVTK, GHEG…QVLE, and HTDEIFSCAFNYKGNIVITGSKDNSCRIWR.

This sequence belongs to the WD repeat WDR69 family. Interacts with IFT46. In early mouse embryos, expression is limited to distal, motile ciliated cells of the node.

Its subcellular location is the cytoplasm. It localises to the cytoskeleton. The protein resides in the flagellum basal body. The protein localises to the flagellum axoneme. Functionally, required for axonemal dynein assembly and ciliary motility in ciliated organs, including Kupffer's vesicle, during embryogenesis. Facilitates the onset of robust cilia motility during development. The protein is Dynein assembly factor with WD repeat domains 1 of Mus musculus (Mouse).